The following is a 127-amino-acid chain: Tyrosine-protein phosphatase 2 (127 aa).

The region spanning 1–127 is the Tyrosine-protein phosphatase domain; the sequence is QGSKVIVMVT…PRDCEAPILV (127 aa). The segment covering 63-81 has biased composition (acidic residues); it reads VYDNDDGTEQNDEQTEEEP. Positions 63–82 are disordered; that stretch reads VYDNDDGTEQNDEQTEEEPE.

The protein belongs to the protein-tyrosine phosphatase family.

The enzyme catalyses O-phospho-L-tyrosyl-[protein] + H2O = L-tyrosyl-[protein] + phosphate. The polypeptide is Tyrosine-protein phosphatase 2 (STY-2) (Styela plicata (Wrinkled sea squirt)).